Consider the following 365-residue polypeptide: Heat-inducible transcription repressor HrcA (365 aa).

It belongs to the HrcA family.

Functionally, negative regulator of class I heat shock genes (grpE-dnaK-dnaJ and groELS operons). Prevents heat-shock induction of these operons. In Nodularia spumigena, this protein is Heat-inducible transcription repressor HrcA.